Here is a 266-residue protein sequence, read N- to C-terminus: Undecaprenyl-diphosphatase (266 aa).

The next 8 membrane-spanning stretches (helical) occupy residues 4 to 24, 39 to 59, 88 to 108, 114 to 134, 147 to 167, 186 to 206, 214 to 234, and 246 to 266; these read ILRV…PISS, LPIV…IIYY, LNLI…GIFI, LFTF…LFLI, IFFS…PGIS, SLEI…FLKY, IIFN…FGLF, and SKLY…YFLV.

This sequence belongs to the UppP family.

The protein localises to the cell inner membrane. The catalysed reaction is di-trans,octa-cis-undecaprenyl diphosphate + H2O = di-trans,octa-cis-undecaprenyl phosphate + phosphate + H(+). Catalyzes the dephosphorylation of undecaprenyl diphosphate (UPP). Confers resistance to bacitracin. The polypeptide is Undecaprenyl-diphosphatase (Borrelia recurrentis (strain A1)).